Consider the following 576-residue polypeptide: Zinc finger protein 791 (576 aa).

The region spanning Val4–Val90 is the KRAB domain. C2H2-type zinc fingers lie at residues Tyr100–His122, Tyr132–His154, Tyr160–His182, Tyr188–His210, Tyr216–His238, Tyr244–His266, Tyr272–His294, Tyr300–His322, Tyr328–His350, Tyr356–His378, Tyr384–His406, Tyr412–His434, Tyr440–His462, Tyr468–His490, Tyr496–His518, Tyr524–His546, and Leu552–His574.

It belongs to the krueppel C2H2-type zinc-finger protein family.

The protein localises to the nucleus. May be involved in transcriptional regulation. The chain is Zinc finger protein 791 (ZNF791) from Pongo abelii (Sumatran orangutan).